A 77-amino-acid polypeptide reads, in one-letter code: Large ribosomal subunit protein bL28 (77 aa).

The protein belongs to the bacterial ribosomal protein bL28 family.

The chain is Large ribosomal subunit protein bL28 from Leptothrix cholodnii (strain ATCC 51168 / LMG 8142 / SP-6) (Leptothrix discophora (strain SP-6)).